The sequence spans 1203 residues: DNA-directed RNA polymerase subunit beta' (1203 aa).

The Zn(2+) site is built by cysteine 60, cysteine 62, cysteine 75, and cysteine 78. Positions 449, 451, and 453 each coordinate Mg(2+). Residues cysteine 818, cysteine 892, cysteine 899, and cysteine 902 each coordinate Zn(2+).

This sequence belongs to the RNA polymerase beta' chain family. In terms of assembly, the RNAP catalytic core consists of 2 alpha, 1 beta, 1 beta' and 1 omega subunit. When a sigma factor is associated with the core the holoenzyme is formed, which can initiate transcription. It depends on Mg(2+) as a cofactor. Zn(2+) serves as cofactor.

It carries out the reaction RNA(n) + a ribonucleoside 5'-triphosphate = RNA(n+1) + diphosphate. Its function is as follows. DNA-dependent RNA polymerase catalyzes the transcription of DNA into RNA using the four ribonucleoside triphosphates as substrates. The sequence is that of DNA-directed RNA polymerase subunit beta' from Bacillus cereus (strain ZK / E33L).